Here is a 683-residue protein sequence, read N- to C-terminus: DNA ligase (683 aa).

Residues 44 to 48 (DAEYD), 93 to 94 (SL), and Glu-127 contribute to the NAD(+) site. Residue Lys-129 is the N6-AMP-lysine intermediate of the active site. Residues Arg-150, Glu-187, Lys-302, and Lys-326 each coordinate NAD(+). Cys-420, Cys-423, Cys-438, and Cys-444 together coordinate Zn(2+). Positions 601–683 (RVGGRLAGLT…SKLLATGGNQ (83 aa)) constitute a BRCT domain.

Belongs to the NAD-dependent DNA ligase family. LigA subfamily. The cofactor is Mg(2+). Mn(2+) is required as a cofactor.

The enzyme catalyses NAD(+) + (deoxyribonucleotide)n-3'-hydroxyl + 5'-phospho-(deoxyribonucleotide)m = (deoxyribonucleotide)n+m + AMP + beta-nicotinamide D-nucleotide.. Functionally, DNA ligase that catalyzes the formation of phosphodiester linkages between 5'-phosphoryl and 3'-hydroxyl groups in double-stranded DNA using NAD as a coenzyme and as the energy source for the reaction. It is essential for DNA replication and repair of damaged DNA. The polypeptide is DNA ligase (Trichlorobacter lovleyi (strain ATCC BAA-1151 / DSM 17278 / SZ) (Geobacter lovleyi)).